The chain runs to 123 residues: Small ribosomal subunit protein uS12 (123 aa).

Position 89 is a 3-methylthioaspartic acid (aspartate 89).

It belongs to the universal ribosomal protein uS12 family. Part of the 30S ribosomal subunit. Contacts proteins S8 and S17. May interact with IF1 in the 30S initiation complex.

Its function is as follows. With S4 and S5 plays an important role in translational accuracy. Interacts with and stabilizes bases of the 16S rRNA that are involved in tRNA selection in the A site and with the mRNA backbone. Located at the interface of the 30S and 50S subunits, it traverses the body of the 30S subunit contacting proteins on the other side and probably holding the rRNA structure together. The combined cluster of proteins S8, S12 and S17 appears to hold together the shoulder and platform of the 30S subunit. The chain is Small ribosomal subunit protein uS12 from Brucella abortus (strain S19).